Reading from the N-terminus, the 265-residue chain is Short-chain dehydrogenase/reductase phqE (265 aa).

NADP(+)-binding residues include Thr23, Ser24, Ile26, Ser46, Asn47, Lys50, Asp76, Arg131, Val203, and Thr205. The chain crosses the membrane as a helical span at residues 25-45; it reads GIGFAVCAAALGHGAIVTIVG.

It belongs to the short-chain dehydrogenases/reductases (SDR) family. The cofactor is NADP(+).

Its subcellular location is the membrane. Its pathway is alkaloid biosynthesis. Its function is as follows. Short-chain dehydrogenase/reductase; part of the gene cluster that mediates the biosynthesis of paraherquamide, a fungal indole alkaloid that belongs to a family of natural products containing a characteristic bicyclo[2.2.2]diazaoctane core. The first steps in the biosynthesis of paraherquamide is the production of the beta-methyl-proline precursor from L-isoleucine. They require oxidation of a terminally hydroxylated L-isoleucine to the corresponding aldehyde by enzymes which have still to be identified. Spontaneous cyclization and dehydration would yield the 4-methyl pyrolline-5-carboxylic acid, which is then reduced by the pyrroline-5-carboxylate reductase phqD leading to the beta-methyl-proline precursor. The next step of paraherquamide biosynthesis involves coupling of beta-methyl-proline and L-tryptophan by the bimodular NRPS phqB, to produce a monooxopiperazine intermediate. The reductase (R) domain of phqB utilizes NADPH for hydride transfer to reduce the thioester bond of the T domain-tethered linear dipeptide to a hemithioaminal intermediate, which spontaneously cleaves the C-S bond to release the aldehyde product. This compound undergoes spontaneous cyclization and dehydration to give a dienamine which is reverse prenylated at C-2 by the reverse prenyltransferase phqJ. The other prenyltransferase present in the cluster, phqI may be a redundant gene in the pathway. During biosynthetic assembly, the key step to produce the polycyclic core is catalyzed by the bifunctional reductase and intramolecular [4+2] Diels-Alderase, phqE, resulting in formation of the [2.2.2] diazaoctane intermediate preparaherquamide. Following formation of preparaherquamide, an indole 2,3-epoxidation-initiated pinacol-like rearrangement is catalyzed by the phqK FAD-dependent monooxygenase. The prenyltransferase phqA, the cytochrome P450 monooxygenase phqL, and the FAD-linked oxidoreductase phqH (or the cytochrome P450 monooxygenase phqM), are proposed to be involved in the formation of the pyran ring. The FAD-dependent monooxygenase phqK is likely responsible for generation of the spiro-oxindole, and the N-methylation is likely mediated by the phqN methyltransferase leading to the isolable natural product paraherquamide F. However, the order of these biosynthetic steps has still to be determined. In late-stage paraherquamide biosynthesis, the third P450 monooxygenase, phqO, is probably responsible for the C-14 hydroxylation, transforming paraherquamide F to paraherquamide G, and paraherquamide E to the final product paraherquamide A. The expansion from the 6-membered ring pyran (in paraherquamides F and G) to the 7-membered dioxepin ring (in paraherquamides A and E) represents a poorly understood but intriguing process that probably involves the 2-oxoglutarate-dependent dioxygenase phqC. Finally, the remaining members of the paraherquamide cluster, including phqI as well as phqM (or phqH), do not have a clearly prescribed role and appear to be redundant. This Penicillium fellutanum protein is Short-chain dehydrogenase/reductase phqE.